The primary structure comprises 505 residues: Bile acid-sensitive ion channel (505 aa).

Positions 1-30 are binds the plasma membrane and stabilizes the channel in the closed state; the sequence is MEQTEKSKVYAENGLLEKIKLCLSKKPLPS. The Cytoplasmic segment spans residues 1–61; that stretch reads MEQTEKSKVY…NIVQNRSKIR (61 aa). A helical membrane pass occupies residues 62–82; it reads RVLWLVVVLGSVSLVTWQIYI. At 83–459 the chain is on the extracellular side; sequence RLLNYFTWPT…GLFCGASLIT (377 aa). Intrachain disulfides connect C112–C207, C185–C192, C298–C377, C315–C373, C328–C350, and C330–C342. N-linked (GlcNAc...) asparagine glycosylation is found at N147, N163, N178, and N179. N306 carries an N-linked (GlcNAc...) asparagine glycan. 3 N-linked (GlcNAc...) asparagine glycosylation sites follow: N370, N405, and N421. The short motif at 454-456 is the GAS motif; ion selectivity filter element; that stretch reads GAS. The chain crosses the membrane as a helical span at residues 460-480; sequence IIEIIEYLFTNFYWICIFFLL. Residues 481-505 are Cytoplasmic-facing; sequence KISEMTQWTPPPQNHLGNKNRIEEC.

It belongs to the amiloride-sensitive sodium channel (TC 1.A.6) family. ASIC5 subfamily. In terms of assembly, forms homotrimeric channels. As to expression, detected in small intestine, duodenum and jejunum. Detected at very low levels in testis and rectum.

The protein localises to the apical cell membrane. The protein resides in the cell membrane. The catalysed reaction is Na(+)(in) = Na(+)(out). It carries out the reaction Li(+)(in) = Li(+)(out). It catalyses the reaction K(+)(in) = K(+)(out). The enzyme catalyses H(+)(in) = H(+)(out). With respect to regulation, inhibited by the diuretic drug amiloride. Its function is as follows. Forms bile acid-gated sodium channels and may play a role in bile acid-dependent absorption and secretion by epithelial cells of the bile ducts. Displays high selectivity for sodium ions but can also permit the permeation of other cations. The gating could be indirect and the consequence of alterations of the membrane environment of the channel by bile acids. As a sodium channel of type II unipolar brush cells of the vestibulocerebellum, controlling the electrical activity of these cells, could play a role in motor coordination and balance. This chain is Bile acid-sensitive ion channel, found in Homo sapiens (Human).